The following is a 596-amino-acid chain: Invasin CotH7 (596 aa).

The first 17 residues, 1 to 17 (MKSLSFISLACLTAVHA), serve as a signal peptide directing secretion. Asn-82, Asn-146, Asn-163, Asn-169, Asn-288, Asn-440, and Asn-544 each carry an N-linked (GlcNAc...) asparagine glycan. Over residues 528–544 (SATIAAPATSESASQDN) the composition is skewed to low complexity. Residues 528–557 (SATIAAPATSESASQDNTSDDTDSASTSSS) form a disordered region. Ser-567 is lipidated: GPI-anchor amidated serine. The propeptide at 568-596 (SASKSAPTFYCLQLVLYLSLSFKNLYKYI) is removed in mature form.

In terms of assembly, interacts with host integrin beta-1 ITGB1 on the cell surface of host alveolar epithelial cells.

Its subcellular location is the cell membrane. Promotes invasion of host epithelial cells by adhering to receptors on the host cell surface to facilitate endocytosis of the pathogen into host cells. Probably binds integrin ITGA3:ITGB1 via ITGB1, on the cell surface of host alveolar epithelial cells. The chain is Invasin CotH7 from Rhizopus delemar (strain RA 99-880 / ATCC MYA-4621 / FGSC 9543 / NRRL 43880) (Mucormycosis agent).